Consider the following 119-residue polypeptide: Holo-[acyl-carrier-protein] synthase (119 aa).

Positions 5 and 51 each coordinate Mg(2+).

It belongs to the P-Pant transferase superfamily. AcpS family. It depends on Mg(2+) as a cofactor.

It is found in the cytoplasm. The catalysed reaction is apo-[ACP] + CoA = holo-[ACP] + adenosine 3',5'-bisphosphate + H(+). Transfers the 4'-phosphopantetheine moiety from coenzyme A to a Ser of acyl-carrier-protein. This chain is Holo-[acyl-carrier-protein] synthase, found in Helicobacter pylori (strain ATCC 700392 / 26695) (Campylobacter pylori).